The primary structure comprises 51 residues: Insulin (51 aa).

Cystine bridges form between C7-C37, C19-C50, and C36-C41.

The protein belongs to the insulin family. Heterodimer of a B chain and an A chain linked by two disulfide bonds.

Its subcellular location is the secreted. Its function is as follows. Insulin decreases blood glucose concentration. It increases cell permeability to monosaccharides, amino acids and fatty acids. It accelerates glycolysis, the pentose phosphate cycle, and glycogen synthesis in liver. This is Insulin (INS) from Camelus dromedarius (Dromedary).